The primary structure comprises 429 residues: C4-dicarboxylate transport protein (429 aa).

A run of 8 helical transmembrane segments spans residues 9–29, 45–65, 79–99, 149–169, 185–205, 223–243, 308–328, and 356–376; these read VLYVQVIFAIIVGVILGHFYP, LIKMVIGPIIFCTVVTGIAGM, LLYFEVVSTFALLLGLAATHI, GEILQILLIALLFGSVLAHLG, VLFGIVHIVTKLAPIGAFGAM, LIGTFYLTSIVFVLVVLGTIA, IYMTMAVLFIAQATNIELTWM, and AATLAVVPTIPLSGMVLILGI.

Belongs to the dicarboxylate/amino acid:cation symporter (DAACS) (TC 2.A.23) family.

The protein localises to the cell inner membrane. In terms of biological role, responsible for the transport of dicarboxylates such as succinate, fumarate, and malate from the periplasm across the membrane. The sequence is that of C4-dicarboxylate transport protein from Burkholderia ambifaria (strain ATCC BAA-244 / DSM 16087 / CCUG 44356 / LMG 19182 / AMMD) (Burkholderia cepacia (strain AMMD)).